The chain runs to 148 residues: Arginine repressor (148 aa).

This sequence belongs to the ArgR family.

Its subcellular location is the cytoplasm. It participates in amino-acid biosynthesis; L-arginine biosynthesis [regulation]. Regulates arginine biosynthesis genes. In Streptococcus pneumoniae serotype 4 (strain ATCC BAA-334 / TIGR4), this protein is Arginine repressor (argR).